A 495-amino-acid chain; its full sequence is Lysine--tRNA ligase (495 aa).

Mg(2+) contacts are provided by Glu-406 and Glu-413.

This sequence belongs to the class-II aminoacyl-tRNA synthetase family. Homodimer. The cofactor is Mg(2+).

It localises to the cytoplasm. The enzyme catalyses tRNA(Lys) + L-lysine + ATP = L-lysyl-tRNA(Lys) + AMP + diphosphate. The polypeptide is Lysine--tRNA ligase (Staphylococcus epidermidis (strain ATCC 35984 / DSM 28319 / BCRC 17069 / CCUG 31568 / BM 3577 / RP62A)).